The chain runs to 467 residues: MSPKTLYDKIWDAHVAQEAEDGTCLLYIDRHLVHEVTSPQAFEGLRMAGRKVHAPEKTIAVPDHNVPTTAGRENPDQMPEDSRIQVAALDTNAREFGVHYYPVTDIRQGIVHIVGPEQGWTLPGMTVVCGDSHTATHGAFGALAHGIGTSEVEHVLATQTLIQKKSKNMKVEITGKLSPGVTAKDIVLTIIGETGTGGGTGYVIEYCGEAIRDLSMEGRMTICNMAIEGGARAGLIAPDETTFEYVKGRPHAPKGAQWEAAVNWWKTLYSDDDAHWDKIVTIRGEDIAPTVTWGTSPEDALPITATVPAPEDFTGGKVEAARRALDYMGLTPGMKLSDIEIDTVFIGSCTNGRIEDLRAAADVVKGKKIKDGMRAMVVPGSGLVRAQAEEEGLAEIFKDAGFEWRLAGCSMCLAMNPDQLSEGERCASTSNRNFEGRQGFKGRTHLVSPAMAAAAAVTGKLTDVREL.

Cys349, Cys409, and Cys412 together coordinate [4Fe-4S] cluster.

The protein belongs to the aconitase/IPM isomerase family. LeuC type 1 subfamily. In terms of assembly, heterodimer of LeuC and LeuD. It depends on [4Fe-4S] cluster as a cofactor.

It carries out the reaction (2R,3S)-3-isopropylmalate = (2S)-2-isopropylmalate. It participates in amino-acid biosynthesis; L-leucine biosynthesis; L-leucine from 3-methyl-2-oxobutanoate: step 2/4. Functionally, catalyzes the isomerization between 2-isopropylmalate and 3-isopropylmalate, via the formation of 2-isopropylmaleate. The sequence is that of 3-isopropylmalate dehydratase large subunit from Ruegeria sp. (strain TM1040) (Silicibacter sp.).